The chain runs to 441 residues: Proline--tRNA ligase (441 aa).

Belongs to the class-II aminoacyl-tRNA synthetase family. ProS type 2 subfamily. In terms of assembly, homodimer.

It is found in the cytoplasm. The catalysed reaction is tRNA(Pro) + L-proline + ATP = L-prolyl-tRNA(Pro) + AMP + diphosphate. In terms of biological role, catalyzes the attachment of proline to tRNA(Pro) in a two-step reaction: proline is first activated by ATP to form Pro-AMP and then transferred to the acceptor end of tRNA(Pro). This chain is Proline--tRNA ligase, found in Methylobacterium radiotolerans (strain ATCC 27329 / DSM 1819 / JCM 2831 / NBRC 15690 / NCIMB 10815 / 0-1).